The chain runs to 118 residues: Histone H2B.N (118 aa).

The protein belongs to the histone H2B family. The nucleosome is a histone octamer containing two molecules each of H2A, H2B, H3 and H4 assembled in one H3-H4 heterotetramer and two H2A-H2B heterodimers. The octamer wraps approximately 147 bp of DNA. In terms of tissue distribution, expressed in germline. Predominantly expressed in oocytes.

The protein resides in the nucleus. It localises to the chromosome. In terms of biological role, core component of nucleosome. Nucleosomes wrap and compact DNA into chromatin, limiting DNA accessibility to the cellular machineries which require DNA as a template. Histones thereby play a central role in transcription regulation, DNA repair, DNA replication and chromosomal stability. DNA accessibility is regulated via a complex set of post-translational modifications of histones, also called histone code, and nucleosome remodeling. This is Histone H2B.N from Homo sapiens (Human).